A 292-amino-acid polypeptide reads, in one-letter code: NAD kinase (292 aa).

The active-site Proton acceptor is the Asp73. NAD(+) is bound by residues 73–74, 147–148, His158, Arg175, Asp177, 188–193, and Gln247; these read DG, NE, and TAYSLS.

It belongs to the NAD kinase family. It depends on a divalent metal cation as a cofactor.

It localises to the cytoplasm. The enzyme catalyses NAD(+) + ATP = ADP + NADP(+) + H(+). In terms of biological role, involved in the regulation of the intracellular balance of NAD and NADP, and is a key enzyme in the biosynthesis of NADP. Catalyzes specifically the phosphorylation on 2'-hydroxyl of the adenosine moiety of NAD to yield NADP. This Shigella boydii serotype 4 (strain Sb227) protein is NAD kinase.